A 485-amino-acid chain; its full sequence is NADH-quinone oxidoreductase subunit N (485 aa).

A run of 14 helical transmembrane segments spans residues 3–23 (LFMP…TDLF), 30–50 (HLAY…VLNW), 67–87 (YASF…MASV), 96–116 (FQGE…MMAS), 120–140 (LITM…LVGF), 154–174 (LLLG…IYGF), 202–222 (FILG…AVPF), 247–267 (AAGF…PLAL), 271–291 (WALI…VLAI), 299–319 (MLGY…AAVG), 332–352 (LFYL…IIAI), 375–395 (ASAL…AGFL), 411–431 (WLMI…FNVI), and 453–473 (LALG…ETLL).

Belongs to the complex I subunit 2 family. In terms of assembly, NDH-1 is composed of 14 different subunits. Subunits NuoA, H, J, K, L, M, N constitute the membrane sector of the complex.

The protein resides in the cell membrane. The catalysed reaction is a quinone + NADH + 5 H(+)(in) = a quinol + NAD(+) + 4 H(+)(out). Functionally, NDH-1 shuttles electrons from NADH, via FMN and iron-sulfur (Fe-S) centers, to quinones in the respiratory chain. The immediate electron acceptor for the enzyme in this species is believed to be ubiquinone. Couples the redox reaction to proton translocation (for every two electrons transferred, four hydrogen ions are translocated across the cytoplasmic membrane), and thus conserves the redox energy in a proton gradient. The polypeptide is NADH-quinone oxidoreductase subunit N (Dehalococcoides mccartyi (strain ATCC BAA-2100 / JCM 16839 / KCTC 5957 / BAV1)).